Here is a 715-residue protein sequence, read N- to C-terminus: Phosphatidylinositol 4-phosphate 5-kinase 6 (715 aa).

A compositionally biased stretch (basic and acidic residues) spans 1-13 (MSVAHADDADDYS). Positions 1–21 (MSVAHADDADDYSRPTGESYH) are disordered. MORN repeat units follow at residues 32 to 54 (YTGQ…DGCM), 55 to 77 (YVGD…SGAT), 78 to 100 (YEGD…SGDL), 101 to 123 (YRGS…NGDC), 124 to 146 (YDGE…NENH), 147 to 169 (YIGQ…NGNR), 170 to 192 (YDGS…DGSF), and 193 to 214 (YVGV…STSS). A disordered region spans residues 253–306 (GASEQSSSGNRTKNSERPRRRSVDGRVSNGEMELRSNGSGYLQVDDNAESTRSS). The span at 255–264 (SEQSSSGNRT) shows a compositional bias: polar residues. Residues 265–276 (KNSERPRRRSVD) are compositionally biased toward basic and acidic residues. One can recognise a PIPK domain in the interval 321 to 711 (TISKGHKNYE…RFRDFIFRVF (391 aa)). The tract at residues 671–692 (YDISKKLEHAYKSMQYDPTSIS) is activation loop.

The catalysed reaction is a 1,2-diacyl-sn-glycero-3-phospho-(1D-myo-inositol 4-phosphate) + ATP = a 1,2-diacyl-sn-glycero-3-phospho-(1D-myo-inositol-4,5-bisphosphate) + ADP + H(+). The protein is Phosphatidylinositol 4-phosphate 5-kinase 6 (PIP5K6) of Arabidopsis thaliana (Mouse-ear cress).